A 225-amino-acid chain; its full sequence is Uracil-DNA glycosylase (225 aa).

D65 serves as the catalytic Proton acceptor.

Belongs to the uracil-DNA glycosylase (UDG) superfamily. UNG family.

Its subcellular location is the cytoplasm. The catalysed reaction is Hydrolyzes single-stranded DNA or mismatched double-stranded DNA and polynucleotides, releasing free uracil.. Functionally, excises uracil residues from the DNA which can arise as a result of misincorporation of dUMP residues by DNA polymerase or due to deamination of cytosine. The sequence is that of Uracil-DNA glycosylase from Bacillus mycoides (strain KBAB4) (Bacillus weihenstephanensis).